Reading from the N-terminus, the 305-residue chain is UPF0612 protein C337.02c (305 aa).

Coiled coils occupy residues 27 to 63 (IERY…MKYE) and 120 to 207 (NDMN…DARS).

Belongs to the UPF0612 family.

This Schizosaccharomyces pombe (strain 972 / ATCC 24843) (Fission yeast) protein is UPF0612 protein C337.02c.